Here is a 398-residue protein sequence, read N- to C-terminus: MASNDKGLEEIPEGQIESNYDEITDSFDSMELKPELLRGIYAYGFERPSAIQQRAILPIIKGNDVIAQAQSGTGKTATFSISALQKLDPNVKGCQALILAPTRELAQQIQKVVVAIGDFMNIECHACIGGTNVREDMKALQEGPQVVVGTPGRVQDMIQRRVLRTDNLKMFILDEADEMLSRGFTEQIYDIFQLLPQSTQVVLLSATMPQDVLEVTTKFMRDPVRILVKKQELTLEGIKQFYIAVEKEEWKLDTLSDLYETVTITQAVIFCNTRRKVDWLTDKLTARDFTVSAMHGDMEQAQRDVIMKEFRSGSSRVLIATDLLARGIDVQQVSLVINYDLPANRENYIHRIGRGGRFGRKGVAINFVTADDVRMMREIEQFYSTQIEEMPMNVADLI.

A Q motif motif is present at residues 25–53 (DSFDSMELKPELLRGIYAYGFERPSAIQQ). Residues 56–226 (ILPIIKGNDV…TKFMRDPVRI (171 aa)) enclose the Helicase ATP-binding domain. 69-76 (AQSGTGKT) provides a ligand contact to ATP. The short motif at 174-177 (DEAD) is the DEAD box element. The 162-residue stretch at 237-398 (GIKQFYIAVE…EMPMNVADLI (162 aa)) folds into the Helicase C-terminal domain.

Belongs to the DEAD box helicase family. eIF4A subfamily. Component of the eIF4F complex, which composition varies with external and internal environmental conditions. It is composed of at least eIF4A, eIF4E and eIF4G.

Its subcellular location is the cytoplasm. It catalyses the reaction ATP + H2O = ADP + phosphate + H(+). In terms of biological role, ATP-dependent RNA helicase which is a subunit of the eIF4F complex involved in cap recognition and is required for mRNA binding to ribosome. In the current model of translation initiation, eIF4A unwinds RNA secondary structures in the 5'-UTR of mRNAs which is necessary to allow efficient binding of the small ribosomal subunit, and subsequent scanning for the initiator codon. This is ATP-dependent RNA helicase eIF4A (tif1) from Neosartorya fischeri (strain ATCC 1020 / DSM 3700 / CBS 544.65 / FGSC A1164 / JCM 1740 / NRRL 181 / WB 181) (Aspergillus fischerianus).